The chain runs to 1083 residues: Integrator complex subunit 3 homolog (1083 aa).

3 disordered regions span residues N551–L579, Y929–A953, and A1014–D1083. Over residues K942–A953 the composition is skewed to low complexity. Phosphoserine is present on residues S1053, S1054, S1058, and S1059. Basic residues predominate over residues H1066–K1077.

It belongs to the Integrator subunit 3 family. Belongs to the multiprotein complex Integrator, at least composed of IntS1, IntS2, IntS3, IntS4, omd/IntS5, IntS6, defl/IntS7, IntS8, IntS9, IntS10, IntS11, IntS12, asun/IntS13, IntS14 and IntS15. The core complex associates with protein phosphatase 2A subunits mts/PP2A and Pp2A-29B, to form the Integrator-PP2A (INTAC) complex.

It localises to the nucleus. The protein localises to the cytoplasm. Component of the integrator complex, a multiprotein complex that terminates RNA polymerase II (Pol II) transcription in the promoter-proximal region of genes. The integrator complex provides a quality checkpoint during transcription elongation by driving premature transcription termination of transcripts that are unfavorably configured for transcriptional elongation: the complex terminates transcription by (1) catalyzing dephosphorylation of the C-terminal domain (CTD) of Pol II subunit Polr2A/Rbp1 and Spt5, and (2) degrading the exiting nascent RNA transcript via endonuclease activity. The integrator complex is also involved in the 3'-end processing of the U7 snRNA, and also the spliceosomal snRNAs U1, U2, U4 and U5. The polypeptide is Integrator complex subunit 3 homolog (IntS3) (Drosophila grimshawi (Hawaiian fruit fly)).